The chain runs to 215 residues: FMN-dependent NADH:quinone oxidoreductase (215 aa).

17–19 (SAS) lines the FMN pocket.

It belongs to the azoreductase type 1 family. Homodimer. FMN serves as cofactor.

The catalysed reaction is 2 a quinone + NADH + H(+) = 2 a 1,4-benzosemiquinone + NAD(+). The enzyme catalyses N,N-dimethyl-1,4-phenylenediamine + anthranilate + 2 NAD(+) = 2-(4-dimethylaminophenyl)diazenylbenzoate + 2 NADH + 2 H(+). In terms of biological role, quinone reductase that provides resistance to thiol-specific stress caused by electrophilic quinones. Functionally, also exhibits azoreductase activity. Catalyzes the reductive cleavage of the azo bond in aromatic azo compounds to the corresponding amines. The sequence is that of FMN-dependent NADH:quinone oxidoreductase from Clostridium botulinum (strain Eklund 17B / Type B).